Consider the following 495-residue polypeptide: Ectonucleoside triphosphate diphosphohydrolase 2 (495 aa).

At 2–4 (ARR) the chain is on the cytoplasmic side. The helical transmembrane segment at 5–25 (AAAVLLLLALGCLLGILLLCL) threads the bilayer. Residues 26 to 465 (GSGDARGPPS…SHRSMLYNYW (440 aa)) lie on the Extracellular side of the membrane. N-linked (GlcNAc...) asparagine glycosylation is present at Asn62. An intrachain disulfide couples Cys73 to Cys97. Glu162 acts as the Proton acceptor in catalysis. 201 to 205 (GASTQ) serves as a coordination point for ATP. 4 disulfides stabilise this stretch: Cys239-Cys286, Cys267-Cys311, Cys324-Cys329, and Cys378-Cys400. N-linked (GlcNAc...) asparagine glycosylation is present at Asn297. Asn418 and Asn444 each carry an N-linked (GlcNAc...) asparagine glycan. A helical membrane pass occupies residues 466–486 (VILILLFVITTLTALLTAVYL). At 487–495 (LRRSKSSTI) the chain is on the cytoplasmic side.

Belongs to the GDA1/CD39 NTPase family. Ca(2+) is required as a cofactor. The cofactor is Mg(2+).

Its subcellular location is the membrane. In the nervous system, could hydrolyze ATP and other nucleotides to regulate purinergic neurotransmission. Hydrolyzes ADP only to a marginal extent. This Gallus gallus (Chicken) protein is Ectonucleoside triphosphate diphosphohydrolase 2 (ENTPD2).